A 465-amino-acid polypeptide reads, in one-letter code: Gamma-aminobutyric acid receptor subunit gamma-1 (465 aa).

Positions 1-20 (MGSGKAFLFSPSLLWSQTRG) are cleaved as a signal peptide. Residues 21–273 (VRLIFLLLTL…FDLSRRMGYF (253 aa)) lie on the Extracellular side of the membrane. N-linked (GlcNAc...) asparagine glycans are attached at residues N50 and N127. Cysteines 188 and 202 form a disulfide. Residue N245 is glycosylated (N-linked (GlcNAc...) asparagine). A helical membrane pass occupies residues 274 to 294 (TIQTYIPCILTVVLSWVSFWI). The Cytoplasmic segment spans residues 295-300 (NKDAVP). The chain crosses the membrane as a helical span at residues 301 to 320 (ARTSLGITTVLTMTTLSTIA). Residues 321–328 (RKSLPKVS) are Extracellular-facing. Residues 329–349 (YVTAMDLFVSVCFIFVFAALM) form a helical membrane-spanning segment. Residues 350 to 444 (EYGTLHYFTS…RIAKIDSYSR (95 aa)) lie on the Cytoplasmic side of the membrane. A helical membrane pass occupies residues 445 to 465 (IFFPTAFALFNLVYWVGYLYL).

Belongs to the ligand-gated ion channel (TC 1.A.9) family. Gamma-aminobutyric acid receptor (TC 1.A.9.5) subfamily. GABRG1 sub-subfamily. In terms of assembly, heteropentamer, formed by a combination of alpha (GABRA1-6), beta (GABRB1-3), gamma (GABRG1-3), delta (GABRD), epsilon (GABRE), rho (GABRR1-3), pi (GABRP) and theta (GABRQ) chains, each subunit exhibiting distinct physiological and pharmacological properties. May be palmitoylated. Expressed in brain.

It is found in the postsynaptic cell membrane. The protein resides in the cell membrane. The enzyme catalyses chloride(in) = chloride(out). Gamma subunit of the heteropentameric ligand-gated chloride channel gated by gamma-aminobutyric acid (GABA), a major inhibitory neurotransmitter in the brain. GABA-gated chloride channels, also named GABA(A) receptors (GABAAR), consist of five subunits arranged around a central pore and contain GABA active binding site(s) located at the alpha and beta subunit interface(s). When activated by GABA, GABAARs selectively allow the flow of chloride anions across the cell membrane down their electrochemical gradient. Chloride influx into the postsynaptic neuron following GABAAR opening decreases the neuron ability to generate a new action potential, thereby reducing nerve transmission. The protein is Gamma-aminobutyric acid receptor subunit gamma-1 of Mus musculus (Mouse).